The primary structure comprises 587 residues: ATP-dependent zinc metalloprotease FtsH 2 (587 aa).

At 1–12 (MSSDRTREVTKR) the chain is on the cytoplasmic side. Residues 13–33 (ILMVLFGLWLLQFFFLPPLTT) form a helical membrane-spanning segment. The Extracellular segment spans residues 34–102 (RPTELSYSAF…EQRYEVTRTP (69 aa)). A helical membrane pass occupies residues 103 to 123 (WWVTLLPTVLWLAVMVGLFAW). Over 124-587 (AQKRQAGAFG…GDDVRRILSA (464 aa)) the chain is Cytoplasmic. 192 to 199 (GPPGTGKT) contributes to the ATP binding site. Residue His416 coordinates Zn(2+). The active site involves Glu417. Residues His420 and Asp492 each contribute to the Zn(2+) site.

This sequence in the central section; belongs to the AAA ATPase family. In the C-terminal section; belongs to the peptidase M41 family. In terms of assembly, homohexamer. The cofactor is Zn(2+).

The protein resides in the cell membrane. Functionally, acts as a processive, ATP-dependent zinc metallopeptidase for both cytoplasmic and membrane proteins. Plays a role in the quality control of integral membrane proteins. The polypeptide is ATP-dependent zinc metalloprotease FtsH 2 (Symbiobacterium thermophilum (strain DSM 24528 / JCM 14929 / IAM 14863 / T)).